We begin with the raw amino-acid sequence, 341 residues long: MSSIIRYDWTAEELHALFDLSLPELLYRAASVHRQHFDPAEIQVSTLLSVKTGGCPEDCSYCPQAQRYDTGVTAQKLMDVDAVVAKARQAKLAGASRFCMGAAWRSPKDRDIPKIASMIREVKALGLETCATLGMLNTCQAQALKDAGLDYYNHNVDTSPDFYDSVIHTRQYQDRLDTLAHVRDVGLKTCCGGIVGMGETRQHRVGLLLTLATLPAHPDSVPVNLLVQVAGTPLHGTQTLDPFEFVRMIAVARITMPRSMVRLSAGRESMSDELQLLCFMAGANSIFYGEKLLTTANPETERDQALFQRLGLRPMHLMENVSNKDQHHGNVHADIACKHVV.

A Radical SAM core domain is found at 40 to 267 (AEIQVSTLLS…RSMVRLSAGR (228 aa)). [4Fe-4S] cluster is bound by residues Cys55, Cys59, and Cys62. [2Fe-2S] cluster-binding residues include Cys99, Cys130, Cys190, and Arg262.

The protein belongs to the radical SAM superfamily. Biotin synthase family. Homodimer. [4Fe-4S] cluster is required as a cofactor. It depends on [2Fe-2S] cluster as a cofactor.

It carries out the reaction (4R,5S)-dethiobiotin + (sulfur carrier)-SH + 2 reduced [2Fe-2S]-[ferredoxin] + 2 S-adenosyl-L-methionine = (sulfur carrier)-H + biotin + 2 5'-deoxyadenosine + 2 L-methionine + 2 oxidized [2Fe-2S]-[ferredoxin]. It functions in the pathway cofactor biosynthesis; biotin biosynthesis; biotin from 7,8-diaminononanoate: step 2/2. Its function is as follows. Catalyzes the conversion of dethiobiotin (DTB) to biotin by the insertion of a sulfur atom into dethiobiotin via a radical-based mechanism. This is Biotin synthase from Xylella fastidiosa (strain M23).